Consider the following 225-residue polypeptide: PKHD-type hydroxylase YbiX (225 aa).

The region spanning 78–177 (TLSTPLFNRY…RVASFMWIQS (100 aa)) is the Fe2OG dioxygenase domain. 3 residues coordinate Fe cation: histidine 96, aspartate 98, and histidine 158. Arginine 168 is a 2-oxoglutarate binding site.

The cofactor is Fe(2+). L-ascorbate serves as cofactor.

The chain is PKHD-type hydroxylase YbiX from Escherichia coli O7:K1 (strain IAI39 / ExPEC).